Reading from the N-terminus, the 629-residue chain is tRNA uridine 5-carboxymethylaminomethyl modification enzyme MnmG (629 aa).

FAD contacts are provided by residues 13 to 18, V125, and S180; that span reads GGGHAG. Residue 273-287 coordinates NAD(+); that stretch reads GPRYCPSIEDKVMRF. Q370 lines the FAD pocket.

This sequence belongs to the MnmG family. As to quaternary structure, homodimer. Heterotetramer of two MnmE and two MnmG subunits. FAD serves as cofactor.

Its subcellular location is the cytoplasm. Its function is as follows. NAD-binding protein involved in the addition of a carboxymethylaminomethyl (cmnm) group at the wobble position (U34) of certain tRNAs, forming tRNA-cmnm(5)s(2)U34. In Shigella sonnei (strain Ss046), this protein is tRNA uridine 5-carboxymethylaminomethyl modification enzyme MnmG.